The primary structure comprises 212 residues: Ion-translocating oxidoreductase complex subunit G (212 aa).

The helical transmembrane segment at 9–29 (GLLLALFALLCTGLVAVVNQQ) threads the bilayer. The residue at position 176 (T176) is an FMN phosphoryl threonine.

This sequence belongs to the RnfG family. In terms of assembly, the complex is composed of six subunits: RnfA, RnfB, RnfC, RnfD, RnfE and RnfG. Requires FMN as cofactor.

The protein resides in the cell inner membrane. Its function is as follows. Part of a membrane-bound complex that couples electron transfer with translocation of ions across the membrane. The protein is Ion-translocating oxidoreductase complex subunit G of Shewanella oneidensis (strain ATCC 700550 / JCM 31522 / CIP 106686 / LMG 19005 / NCIMB 14063 / MR-1).